A 386-amino-acid polypeptide reads, in one-letter code: L-lactate oxidase (386 aa).

The FMN hydroxy acid dehydrogenase domain occupies 16–382; the sequence is AQAPFPICFA…RTITLVKNDG (367 aa). Y42 provides a ligand contact to pyruvate. FMN contacts are provided by residues 95–97, S124, and Q146; that span reads PVG. Residue Y148 coordinates pyruvate. An FMN-binding site is contributed by T174. Residue R183 coordinates pyruvate. The FMN site is built by K253 and S275. Pyruvate is bound by residues H277 and R280. The active-site Proton acceptor is H277. Residues 308-312 and R332 each bind FMN; that span reads DSGVY.

The protein belongs to the FMN-dependent alpha-hydroxy acid dehydrogenase family. As to quaternary structure, homotetramer. FMN serves as cofactor.

The enzyme catalyses a (2S)-2-hydroxycarboxylate + O2 = a 2-oxocarboxylate + H2O2. The catalysed reaction is (S)-lactate + O2 = pyruvate + H2O2. It carries out the reaction 2-hydroxyoctanoate + O2 = 2-oxooctanoate + H2O2. It catalyses the reaction mandelate + O2 = phenylglyoxylate + H2O2. The enzyme catalyses 2-hydroxyoctadecanoate + O2 = 2-oxooctadecanoate + H2O2. The catalysed reaction is (S)-2-hydroxyglutarate + O2 = H2O2 + 2-oxoglutarate. Its function is as follows. Oxidase that catalyzes the oxidation of a broad range of 2-hydroxyacids in vitro, such as (S)-lactate, 2-hydroxyoctanoate, mandelate, 2-hydroxyoctadecanoate and (S)-2-hydroxyglutarate, to the corresponding 2-oxoacids, with a reduction of O2 to H2O2. May be involved in the utilization of L-lactate as an energy source for growth. The protein is L-lactate oxidase of Lysinibacillus sphaericus (strain C3-41).